The sequence spans 173 residues: Adenine phosphoribosyltransferase (173 aa).

Belongs to the purine/pyrimidine phosphoribosyltransferase family. As to quaternary structure, homodimer.

It is found in the cytoplasm. It catalyses the reaction AMP + diphosphate = 5-phospho-alpha-D-ribose 1-diphosphate + adenine. Its pathway is purine metabolism; AMP biosynthesis via salvage pathway; AMP from adenine: step 1/1. Catalyzes a salvage reaction resulting in the formation of AMP, that is energically less costly than de novo synthesis. This is Adenine phosphoribosyltransferase from Macrococcus caseolyticus (strain JCSC5402) (Macrococcoides caseolyticum).